The primary structure comprises 226 residues: Adenylate kinase (226 aa).

11 to 16 (GSGKGT) is a binding site for ATP. The interval 31–64 (SAGEILKHALSVTKFHFNFNTDNMLNQINSGNLV) is NMP. AMP contacts are provided by residues 62-64 (NLV), 90-93 (GFPR), and Gln97. The interval 127–164 (GRQVHIKSGRTYHIKFNPPKLDGIDDITGEKLVIRADD) is LID. ATP is bound by residues Arg128 and 137 to 138 (TY). AMP contacts are provided by Arg161 and Arg172. Position 205 (Gln205) interacts with ATP.

Belongs to the adenylate kinase family. As to quaternary structure, monomer.

It is found in the cytoplasm. The enzyme catalyses AMP + ATP = 2 ADP. The protein operates within purine metabolism; AMP biosynthesis via salvage pathway; AMP from ADP: step 1/1. Catalyzes the reversible transfer of the terminal phosphate group between ATP and AMP. Plays an important role in cellular energy homeostasis and in adenine nucleotide metabolism. The protein is Adenylate kinase of Blochmanniella floridana.